Here is a 155-residue protein sequence, read N- to C-terminus: Ribosomal RNA large subunit methyltransferase H (155 aa).

S-adenosyl-L-methionine contacts are provided by residues leucine 72, glycine 103, and 122–127; that span reads LSPLTL.

This sequence belongs to the RNA methyltransferase RlmH family. As to quaternary structure, homodimer.

It is found in the cytoplasm. It catalyses the reaction pseudouridine(1915) in 23S rRNA + S-adenosyl-L-methionine = N(3)-methylpseudouridine(1915) in 23S rRNA + S-adenosyl-L-homocysteine + H(+). Specifically methylates the pseudouridine at position 1915 (m3Psi1915) in 23S rRNA. This is Ribosomal RNA large subunit methyltransferase H from Histophilus somni (strain 2336) (Haemophilus somnus).